The chain runs to 204 residues: Transmembrane protein 186 (204 aa).

Residues 1–69 lie on the Mitochondrial matrix side of the membrane; sequence MLELLCRVSP…RLVAALSRLK (69 aa). A helical transmembrane segment spans residues 70 to 90; the sequence is VYQAVITAAGTPIVFALGSAG. The Mitochondrial intermembrane portion of the chain corresponds to 91–95; that stretch reads QLSTD. The helical transmembrane segment at 96–116 threads the bilayer; the sequence is ALAIYAAIGVTGLITLTLASY. The Mitochondrial matrix segment spans residues 117-204; the sequence is ASSNLVGFIY…RQLFEGLFGN (88 aa).

Belongs to the TMEM186 family. In terms of assembly, associates with mitochondrial complex I assembly intermediates during its biogenesis.

Its subcellular location is the mitochondrion inner membrane. As part of the MCIA complex, required for efficient assembly of the mitochondrial complex I. The polypeptide is Transmembrane protein 186 (Drosophila melanogaster (Fruit fly)).